The primary structure comprises 151 residues: Transcriptional repressor NrdR (151 aa).

The segment at 3 to 34 (CPYCAYGESKVVDSRSTEDGSSIRRRRECLKC) is a zinc-finger region. The region spanning 49-139 (ILVIKKNMSR…VYRQFKDINT (91 aa)) is the ATP-cone domain.

Belongs to the NrdR family. Requires Zn(2+) as cofactor.

Its function is as follows. Negatively regulates transcription of bacterial ribonucleotide reductase nrd genes and operons by binding to NrdR-boxes. This chain is Transcriptional repressor NrdR, found in Clostridium botulinum (strain Loch Maree / Type A3).